The primary structure comprises 189 residues: Interferon alpha-4 (189 aa).

A signal peptide spans methionine 1–glycine 23. 2 disulfide bridges follow: cysteine 24–cysteine 122 and cysteine 52–cysteine 162.

Belongs to the alpha/beta interferon family.

It is found in the secreted. Its function is as follows. Produced by macrophages, IFN-alpha have antiviral activities. Interferon stimulates the production of two enzymes: a protein kinase and an oligoadenylate synthetase. This is Interferon alpha-4 (IFNA4) from Homo sapiens (Human).